The primary structure comprises 176 residues: Large ribosomal subunit protein uL6 (176 aa).

Basic and acidic residues predominate over residues 151-170 (RPPEPYKGKGVRYADEQVRR). The tract at residues 151–176 (RPPEPYKGKGVRYADEQVRRKEAKKK) is disordered.

The protein belongs to the universal ribosomal protein uL6 family. Part of the 50S ribosomal subunit.

Its function is as follows. This protein binds to the 23S rRNA, and is important in its secondary structure. It is located near the subunit interface in the base of the L7/L12 stalk, and near the tRNA binding site of the peptidyltransferase center. This chain is Large ribosomal subunit protein uL6, found in Shewanella halifaxensis (strain HAW-EB4).